The primary structure comprises 369 residues: uncharacterized protein (369 aa).

Residues 1-35 (MQTNNPSYFFRSESALQDEKRKEEKSHNPNGNPRN) are disordered. Positions 17 to 27 (QDEKRKEEKSH) are enriched in basic and acidic residues. 6 WD repeats span residues 83–127 (GHSG…CVET), 130–169 (GHTDYVKCLLLLEEEGLLLSGSTDASLIVWDVSSQPSRLL), 174–213 (GHSRGIECITRQPNTDIFWTCGSESSIRCWHITKVGGSQL), 220–260 (GHQS…HEET), 263–301 (EHPDVCTDVLTLADGNIATACRDEEIRVWDTTTGNVKDI), and 304–341 (GHYESVTKILQWKSYLISSSLDQTIRVWDLEYSADNNE).

This is an uncharacterized protein from Schizosaccharomyces pombe (strain 972 / ATCC 24843) (Fission yeast).